The following is a 268-amino-acid chain: Thymidylate synthase (268 aa).

Residues R26 and 131–132 each bind dUMP; that span reads RR. C151 serves as the catalytic Nucleophile. DUMP-binding positions include 171-174, N182, and 212-214; these read RSAD and HIY. D174 is a (6R)-5,10-methylene-5,6,7,8-tetrahydrofolate binding site. Residue S267 coordinates (6R)-5,10-methylene-5,6,7,8-tetrahydrofolate.

The protein belongs to the thymidylate synthase family. Bacterial-type ThyA subfamily. As to quaternary structure, homodimer.

The protein localises to the cytoplasm. The enzyme catalyses dUMP + (6R)-5,10-methylene-5,6,7,8-tetrahydrofolate = 7,8-dihydrofolate + dTMP. Its pathway is pyrimidine metabolism; dTTP biosynthesis. Catalyzes the reductive methylation of 2'-deoxyuridine-5'-monophosphate (dUMP) to 2'-deoxythymidine-5'-monophosphate (dTMP) while utilizing 5,10-methylenetetrahydrofolate (mTHF) as the methyl donor and reductant in the reaction, yielding dihydrofolate (DHF) as a by-product. This enzymatic reaction provides an intracellular de novo source of dTMP, an essential precursor for DNA biosynthesis. The sequence is that of Thymidylate synthase from Corynebacterium aurimucosum (strain ATCC 700975 / DSM 44827 / CIP 107346 / CN-1) (Corynebacterium nigricans).